The sequence spans 343 residues: Protein RecA (343 aa).

Belongs to the RecA family.

The protein resides in the cytoplasm. In terms of biological role, can catalyze the hydrolysis of ATP in the presence of single-stranded DNA, the ATP-dependent uptake of single-stranded DNA by duplex DNA, and the ATP-dependent hybridization of homologous single-stranded DNAs. It interacts with LexA causing its activation and leading to its autocatalytic cleavage. The protein is Protein RecA of Coxiella burnetii (strain RSA 493 / Nine Mile phase I).